The chain runs to 1464 residues: Nuclear pore complex protein NUP155 (1464 aa).

Serine 2 carries the post-translational modification N-acetylserine.

The protein belongs to the non-repetitive/WGA-negative nucleoporin family. In terms of assembly, part of the nuclear pore complex (NPC). The NPC has an eight-fold symmetrical structure comprising a central transport channel and two rings, the cytoplasmic and nuclear rings, to which eight filaments are attached. The cytoplasmic filaments have loose ends, while the nuclear filaments are joined in a distal ring, forming a nuclear basket. NPCs are highly dynamic in configuration and composition, and can be devided in 3 subcomplexes, the NUP62 subcomplex, the NUP107-160 subcomplex and the NUP93 subcomplex, containing approximately 30 different nucleoporin proteins.

It localises to the nucleus. It is found in the nuclear pore complex. Its function is as follows. Major component of the nuclear pore complex (NPC). The polypeptide is Nuclear pore complex protein NUP155 (Arabidopsis thaliana (Mouse-ear cress)).